Consider the following 256-residue polypeptide: Thiazole synthase (256 aa).

The active-site Schiff-base intermediate with DXP is the Lys-95. 1-deoxy-D-xylulose 5-phosphate-binding positions include Gly-156, 182 to 183 (AG), and 204 to 205 (NT).

This sequence belongs to the ThiG family. As to quaternary structure, homotetramer. Forms heterodimers with either ThiH or ThiS.

It is found in the cytoplasm. The enzyme catalyses [ThiS sulfur-carrier protein]-C-terminal-Gly-aminoethanethioate + 2-iminoacetate + 1-deoxy-D-xylulose 5-phosphate = [ThiS sulfur-carrier protein]-C-terminal Gly-Gly + 2-[(2R,5Z)-2-carboxy-4-methylthiazol-5(2H)-ylidene]ethyl phosphate + 2 H2O + H(+). It functions in the pathway cofactor biosynthesis; thiamine diphosphate biosynthesis. Functionally, catalyzes the rearrangement of 1-deoxy-D-xylulose 5-phosphate (DXP) to produce the thiazole phosphate moiety of thiamine. Sulfur is provided by the thiocarboxylate moiety of the carrier protein ThiS. In vitro, sulfur can be provided by H(2)S. The sequence is that of Thiazole synthase from Salmonella choleraesuis (strain SC-B67).